A 237-amino-acid polypeptide reads, in one-letter code: Demethylmenaquinone methyltransferase (237 aa).

S-adenosyl-L-methionine-binding positions include Thr-58, Asp-79, and 106–107 (NA).

Belongs to the class I-like SAM-binding methyltransferase superfamily. MenG/UbiE family.

It carries out the reaction a 2-demethylmenaquinol + S-adenosyl-L-methionine = a menaquinol + S-adenosyl-L-homocysteine + H(+). The protein operates within quinol/quinone metabolism; menaquinone biosynthesis; menaquinol from 1,4-dihydroxy-2-naphthoate: step 2/2. Functionally, methyltransferase required for the conversion of demethylmenaquinol (DMKH2) to menaquinol (MKH2). In Bacillus anthracis (strain A0248), this protein is Demethylmenaquinone methyltransferase.